The chain runs to 230 residues: Probable septum site-determining protein MinC (230 aa).

It belongs to the MinC family. As to quaternary structure, interacts with MinD and FtsZ.

Its function is as follows. Cell division inhibitor that blocks the formation of polar Z ring septums. Rapidly oscillates between the poles of the cell to destabilize FtsZ filaments that have formed before they mature into polar Z rings. Prevents FtsZ polymerization. The polypeptide is Probable septum site-determining protein MinC (Cronobacter sakazakii (strain ATCC BAA-894) (Enterobacter sakazakii)).